The primary structure comprises 311 residues: Mitochondrial FAD carrier protein FLX1 (311 aa).

Solcar repeat units follow at residues 7 to 101, 123 to 210, and 224 to 310; these read TPLQ…TKEL, MNSL…LKQR, and LTNL…LKHR. The next 6 helical transmembrane spans lie at 13 to 33, 77 to 97, 129 to 149, 183 to 203, 230 to 250, and 266 to 286; these read VISG…LDLL, LSIN…LYGV, LSAG…IWVI, LWKG…YFAV, IEIT…FQLL, and LFPL…YKGL.

It belongs to the mitochondrial carrier (TC 2.A.29) family.

It localises to the mitochondrion inner membrane. Functionally, transport of FAD from the cytosol to the mitochondrial matrix. This is Mitochondrial FAD carrier protein FLX1 (FLX1) from Saccharomyces cerevisiae (strain ATCC 204508 / S288c) (Baker's yeast).